A 134-amino-acid polypeptide reads, in one-letter code: Putative nickel-responsive regulator (134 aa).

His78, His89, His91, and Cys97 together coordinate Ni(2+).

Belongs to the transcriptional regulatory CopG/NikR family. Requires Ni(2+) as cofactor.

Transcriptional regulator. In Chlorobaculum parvum (strain DSM 263 / NCIMB 8327) (Chlorobium vibrioforme subsp. thiosulfatophilum), this protein is Putative nickel-responsive regulator.